We begin with the raw amino-acid sequence, 281 residues long: Putative glutamine amidotransferase-like protein RP404 (281 aa).

A Glutamine amidotransferase type-1 domain is found at 19-281 (KYTYADFPWY…KALVKASKYI (263 aa)). In terms of domain architecture, RPE1 insert spans 139-174 (RHFSKLTYSKKFECNTEAFATTVYTLPIKLEFENAP).

This Rickettsia prowazekii (strain Madrid E) protein is Putative glutamine amidotransferase-like protein RP404.